A 371-amino-acid polypeptide reads, in one-letter code: Protease PrtS (371 aa).

Residue H169 coordinates Zn(2+). E170 is an active-site residue. Zn(2+) contacts are provided by H173 and E193. The active-site Proton donor is the H273. The disordered stretch occupies residues 352-371 (KEEDKDKGKDEGKDKAETKV).

Belongs to the peptidase M4 family. Zn(2+) serves as cofactor.

It localises to the secreted. With respect to regulation, inhibited by 8 mM 1,10-phenanthroline, but not by EDTA or PMSF. Functionally, metalloprotease involved in the inhibition of insect antibacterial peptides. Reduces the antibacterial activity of G.mellonella hemolymph by 50%. Reduces the antibacterial activity of cecropin A by 80% and completely inhibits cecropin B. In Photorhabdus sp. (strain Az29), this protein is Protease PrtS.